The following is a 415-amino-acid chain: Serine/threonine transporter SstT (415 aa).

8 helical membrane-spanning segments follow: residues 21-41 (ILLG…AALA), 45-65 (LGTL…LVLV), 85-105 (FLYL…SVLF), 142-162 (ALLN…GIAF), 193-213 (LGIF…ALWG), 217-237 (LLMV…PLIV), 289-309 (VAIP…ITVL), and 331-351 (VVAS…LLLI).

Belongs to the dicarboxylate/amino acid:cation symporter (DAACS) (TC 2.A.23) family.

The protein localises to the cell inner membrane. The catalysed reaction is L-serine(in) + Na(+)(in) = L-serine(out) + Na(+)(out). The enzyme catalyses L-threonine(in) + Na(+)(in) = L-threonine(out) + Na(+)(out). Involved in the import of serine and threonine into the cell, with the concomitant import of sodium (symport system). In Pectobacterium atrosepticum (strain SCRI 1043 / ATCC BAA-672) (Erwinia carotovora subsp. atroseptica), this protein is Serine/threonine transporter SstT.